The primary structure comprises 170 residues: Probable chorismate pyruvate-lyase (170 aa).

Substrate-binding residues include arginine 77, leucine 114, and glutamate 157.

It belongs to the UbiC family.

It localises to the cytoplasm. The catalysed reaction is chorismate = 4-hydroxybenzoate + pyruvate. It participates in cofactor biosynthesis; ubiquinone biosynthesis. Removes the pyruvyl group from chorismate, with concomitant aromatization of the ring, to provide 4-hydroxybenzoate (4HB) for the ubiquinone pathway. The protein is Probable chorismate pyruvate-lyase of Pasteurella multocida (strain Pm70).